Reading from the N-terminus, the 73-residue chain is MKSEIKKNDMVKVIAGDDKGKVAKVLAVLPKTSQVIVEGCKVVKKAIKPTDDNPKGGFIHKEKPMHISNVKKA.

The span at 51-65 (DDNPKGGFIHKEKPM) shows a compositional bias: basic and acidic residues. Residues 51–73 (DDNPKGGFIHKEKPMHISNVKKA) are disordered.

Belongs to the universal ribosomal protein uL24 family. In terms of assembly, part of the 50S ribosomal subunit.

In terms of biological role, one of two assembly initiator proteins, it binds directly to the 5'-end of the 23S rRNA, where it nucleates assembly of the 50S subunit. Its function is as follows. One of the proteins that surrounds the polypeptide exit tunnel on the outside of the subunit. This is Large ribosomal subunit protein uL24 from Helicobacter acinonychis (strain Sheeba).